The sequence spans 499 residues: Ribulose bisphosphate carboxylase large chain (499 aa).

The substrate site is built by asparagine 139 and threonine 189. Residue lysine 191 is the Proton acceptor of the active site. Lysine 193 provides a ligand contact to substrate. 3 residues coordinate Mg(2+): lysine 217, aspartate 219, and glutamate 220. Lysine 217 is modified (N6-carboxylysine). Catalysis depends on histidine 309, which acts as the Proton acceptor. The substrate site is built by arginine 310, histidine 342, and serine 394.

The protein belongs to the RuBisCO large chain family. Type I subfamily. In terms of assembly, heterohexadecamer of 8 large chains and 8 small chains. It depends on Mg(2+) as a cofactor.

The catalysed reaction is 2 (2R)-3-phosphoglycerate + 2 H(+) = D-ribulose 1,5-bisphosphate + CO2 + H2O. It catalyses the reaction D-ribulose 1,5-bisphosphate + O2 = 2-phosphoglycolate + (2R)-3-phosphoglycerate + 2 H(+). Its function is as follows. RuBisCO catalyzes two reactions: the carboxylation of D-ribulose 1,5-bisphosphate, the primary event in carbon dioxide fixation, as well as the oxidative fragmentation of the pentose substrate. Both reactions occur simultaneously and in competition at the same active site. In Paraburkholderia xenovorans (strain LB400), this protein is Ribulose bisphosphate carboxylase large chain.